The following is a 130-amino-acid chain: Small ribosomal subunit protein uS8 (130 aa).

This sequence belongs to the universal ribosomal protein uS8 family. In terms of assembly, part of the 30S ribosomal subunit. Contacts proteins S5 and S12.

Functionally, one of the primary rRNA binding proteins, it binds directly to 16S rRNA central domain where it helps coordinate assembly of the platform of the 30S subunit. The polypeptide is Small ribosomal subunit protein uS8 (Ruegeria pomeroyi (strain ATCC 700808 / DSM 15171 / DSS-3) (Silicibacter pomeroyi)).